The primary structure comprises 572 residues: Nuclear hormone receptor family member nhr-25 (572 aa).

Positions 15-90 (GEMCPVCGDR…MGMKMEAVRA (76 aa)) form a DNA-binding region, nuclear receptor. 2 consecutive NR C4-type zinc fingers follow at residues 18 to 38 (CPVC…CESC) and 54 to 78 (CSAE…FQKC). The NR LBD domain maps to 307-567 (PTEKTVDHFY…PTPQATYTAV (261 aa)).

This sequence belongs to the nuclear hormone receptor family. As to quaternary structure, interacts with lin-39. Interacts with nob-1. In terms of tissue distribution, expressed in the epidermis, the developing somatic gonad, and a subset of other epithelial cells.

It is found in the nucleus. Orphan nuclear receptor and probable transcription activator, required during development. Plays a role in male tail tip morphogenesis regulating the expression of the transcription factor dmd-3 in a negative feedback loop. Regulates vulval precursor cell (VPC) differentiation, in concert with homeobox protein lin-39. Involved in promoting embryogenesis, in concert with homeobox protein nob-1. May play a role in modulation of lifespan and immunity. The protein is Nuclear hormone receptor family member nhr-25 of Caenorhabditis elegans.